The sequence spans 61 residues: UPF0391 membrane protein Bpro_0066 (61 aa).

2 consecutive transmembrane segments (helical) span residues 5-25 (AIIFAVISLIAGALGFGGVAA) and 33-53 (ILFGLFLILAVIFVVLAALGV).

It belongs to the UPF0391 family.

The protein resides in the cell membrane. This Polaromonas sp. (strain JS666 / ATCC BAA-500) protein is UPF0391 membrane protein Bpro_0066.